Here is a 178-residue protein sequence, read N- to C-terminus: Oligoribonuclease (178 aa).

The region spanning 7–168 is the Exonuclease domain; that stretch reads LIWIDLEMTG…DDIRESIAEL (162 aa). The active site involves Tyr-128.

Belongs to the oligoribonuclease family.

The protein localises to the cytoplasm. Functionally, 3'-to-5' exoribonuclease specific for small oligoribonucleotides. The protein is Oligoribonuclease of Pseudomonas savastanoi pv. phaseolicola (strain 1448A / Race 6) (Pseudomonas syringae pv. phaseolicola (strain 1448A / Race 6)).